The following is a 274-amino-acid chain: Caldesmon, smooth muscle (274 aa).

2 disordered regions span residues 1–102 (SNLK…FSPK) and 179–274 (KGNV…EKEP). 2 stretches are compositionally biased toward basic and acidic residues: residues 12 to 21 (GSEKLKEKQQ) and 28 to 95 (DELK…EKKP). Residues 182 to 194 (VFSSPGGTGTPNK) are compositionally biased toward polar residues. Basic and acidic residues-rich tracts occupy residues 226–245 (SDLRPGDVSGKRNLWEKQSV) and 260–274 (KKSETDGLRQFEKEP).

The protein localises to the cytoplasm. Its subcellular location is the cytoskeleton. It is found in the myofibril. It localises to the stress fiber. Its function is as follows. Control of actomyosin interactions in smooth muscle and nonmuscle cells (could act as a bridge between myosin and actin filaments). Inhibits the actin-activated ATPase of myosin this inhibition is attenuated by calcium-calmodulin and is potentiated by tropomyosin. Interacts with actin, myosin, 2 molecules of tropomyosin and with calmodulin. This chain is Caldesmon, smooth muscle (CALD1), found in Meleagris gallopavo (Wild turkey).